We begin with the raw amino-acid sequence, 670 residues long: MEGHVEEGSELGEQKVLIDNPADILVIAAYFLLVIGVGLWSMFRTNRGTVGGYFLAGRSMVWWPVGASLFASNIGSGHFVGLAGTGAASGLAVAGFEWNALFVVLLLGWLFVPVYLTAGVITMPQYLRKRFGGRRIRLYLSVLSLFLYIFTKISVDMFSGAVFIQQALGWNIYASVIALLGITMIYTVTGGLAALMYTDTVQTFVILAGAFILTGYAFHEVGGYSGLFDKYLGAVTSLTVSKDPAVGNISSTCYQPRPDSYHLLRDPVTGGLPWPALLLGLTIVSGWHWCSDQVIVQRCLAGKNLTHIKAGCILCGYLKLMPMFLMVMPGMISRILYPDEVACVVPEVCKRVCGTEVGCSNIAYPRLVVKLMPNGLRGLMLAVMLAALMSSLASIFNSSSTLFTMDIYTRLRPRAGDRELLLVGRLWVVFIVAVSVAWLPVVQAAQGGQLFDYIQSVSSYLAPPVSAVFVLALFVPRVNEKGAFWGLIGGLLMGLARLIPEFFFGTGSCVRPSACPAIFCRVHYLYFAIILFFCSGFLTLAISRCTAPIPQKHLHRLVFSLRHSKEEREDLDAEELEGPAPPPVQNGCQECAMGIEEVQSPAPGLLRQCLLWFCGMSKSGSGSPPPTTEEVAATTRRLEDISEDPSWARVVNLNALLMMTVAVFLWGFYA.

Over 1-20 the chain is Extracellular; that stretch reads MEGHVEEGSELGEQKVLIDN. A helical transmembrane segment spans residues 21–42; it reads PADILVIAAYFLLVIGVGLWSM. Residues 43–61 are Cytoplasmic-facing; it reads FRTNRGTVGGYFLAGRSMV. A helical transmembrane segment spans residues 62–83; it reads WWPVGASLFASNIGSGHFVGLA. Na(+)-binding residues include Ala-71 and Ile-74. The Extracellular segment spans residues 84–91; that stretch reads GTGAASGL. A helical membrane pass occupies residues 92 to 112; it reads AVAGFEWNALFVVLLLGWLFV. Residues 113-134 are Cytoplasmic-facing; the sequence is PVYLTAGVITMPQYLRKRFGGR. The chain crosses the membrane as a helical span at residues 135 to 164; it reads RIRLYLSVLSLFLYIFTKISVDMFSGAVFI. Over 165–171 the chain is Extracellular; that stretch reads QQALGWN. 2 helical membrane passes run 172–193 and 194–215; these read IYASVIALLGITMIYTVTGGLA and ALMYTDTVQTFVILAGAFILTG. At 216–273 the chain is on the extracellular side; the sequence is YAFHEVGGYSGLFDKYLGAVTSLTVSKDPAVGNISSTCYQPRPDSYHLLRDPVTGGLP. Asn-248 carries an N-linked (GlcNAc...) asparagine glycan. Disulfide bonds link Cys-253-Cys-509, Cys-343-Cys-349, Cys-353-Cys-359, and Cys-515-Cys-520. Residues 274–293 form a helical membrane-spanning segment; the sequence is WPALLLGLTIVSGWHWCSDQ. At 294–307 the chain is on the cytoplasmic side; sequence VIVQRCLAGKNLTH. Residues 308–329 traverse the membrane as a helical segment; it reads IKAGCILCGYLKLMPMFLMVMP. The Extracellular segment spans residues 330–373; it reads GMISRILYPDEVACVVPEVCKRVCGTEVGCSNIAYPRLVVKLMP. The helical transmembrane segment at 374 to 404 threads the bilayer; that stretch reads NGLRGLMLAVMLAALMSSLASIFNSSSTLFT. Residues Ala-387, Ser-390, and Ser-391 each coordinate Na(+). The Cytoplasmic segment spans residues 405-422; sequence MDIYTRLRPRAGDRELLL. The helical transmembrane segment at 423-444 threads the bilayer; that stretch reads VGRLWVVFIVAVSVAWLPVVQA. At 445-449 the chain is on the extracellular side; sequence AQGGQ. A helical membrane pass occupies residues 450-475; sequence LFDYIQSVSSYLAPPVSAVFVLALFV. At 476 to 480 the chain is on the cytoplasmic side; it reads PRVNE. The helical transmembrane segment at 481–503 threads the bilayer; that stretch reads KGAFWGLIGGLLMGLARLIPEFF. Over 504–521 the chain is Extracellular; sequence FGTGSCVRPSACPAIFCR. Residues 522 to 545 form a helical membrane-spanning segment; the sequence is VHYLYFAIILFFCSGFLTLAISRC. The Cytoplasmic portion of the chain corresponds to 546-649; sequence TAPIPQKHLH…DISEDPSWAR (104 aa). A helical transmembrane segment spans residues 650–668; that stretch reads VVNLNALLMMTVAVFLWGF. Topologically, residues 669 to 670 are extracellular; that stretch reads YA.

Belongs to the sodium:solute symporter (SSF) (TC 2.A.21) family. Forms a heterodimer (via TM13) with PDZK1IP1 (via N-terminal transmembrane helix); this interaction enhances SLC5A2 transporter activity. In terms of processing, glycosylated at a single site. As to expression, kidney, in proximal tubule S1 segments.

The protein resides in the apical cell membrane. It carries out the reaction D-glucose(out) + Na(+)(out) = D-glucose(in) + Na(+)(in). Its activity is regulated as follows. Enhanced by the interaction with PDZK1IP1/MAP17. Functionally, electrogenic Na(+)-coupled sugar symporter that actively transports D-glucose at the plasma membrane, with a Na(+) to sugar coupling ratio of 1:1. Transporter activity is driven by a transmembrane Na(+) electrochemical gradient set by the Na(+)/K(+) pump. Unlike SLC5A1/SGLT1, requires the auxiliary protein PDZK1IP1/MAP17 for full transporter activity. Has a primary role in D-glucose reabsorption from glomerular filtrate across the brush border of the early proximal tubules of the kidney. In Rattus norvegicus (Rat), this protein is Sodium/glucose cotransporter 2 (Slc5a2).